We begin with the raw amino-acid sequence, 311 residues long: Systemic RNA interference defective protein 2 (311 aa).

The first 20 residues, 1–20 (MPRFVYFCFALIALLPISWT), serve as a signal peptide directing secretion. The Extracellular portion of the chain corresponds to 21-188 (MDGILITDVE…EETKTVVNKN (168 aa)). Residues 189–209 (GGAVAVAVIEGIALIAILAFL) form a helical membrane-spanning segment. The Cytoplasmic segment spans residues 210 to 311 (GYRTMVNHKL…NDPFATLESW (102 aa)). A compositionally biased stretch (polar residues) spans 287–301 (NSSAAQPSTTSNGQF). Positions 287-311 (NSSAAQPSTTSNGQFNDPFATLESW) are disordered.

In terms of tissue distribution, expressed in the intestinal lumen. Also present, at lower levels, in the excretory duct cells.

The protein localises to the apical cell membrane. It localises to the cytoplasm. Its function is as follows. Plays a role in RNA-mediated gene silencing by mediating endocytic uptake of double-stranded RNA (dsRNA) ingested from the environment into intestinal cells from the intestinal lumen. Selective for dsRNAs of at least 50 bp. Required for avoidance behavior induced by small RNAs derived from pathogenic bacteria such as P.aeruginosa. The polypeptide is Systemic RNA interference defective protein 2 (Caenorhabditis elegans).